The sequence spans 78 residues: Small ribosomal subunit protein bS20 (78 aa).

The protein belongs to the bacterial ribosomal protein bS20 family.

Its function is as follows. Binds directly to 16S ribosomal RNA. The protein is Small ribosomal subunit protein bS20 of Streptococcus pneumoniae serotype 4 (strain ATCC BAA-334 / TIGR4).